A 341-amino-acid polypeptide reads, in one-letter code: Tetraacyldisaccharide 4'-kinase (341 aa).

Residue 54-61 (TVGGTGKT) participates in ATP binding.

Belongs to the LpxK family.

It catalyses the reaction a lipid A disaccharide + ATP = a lipid IVA + ADP + H(+). It participates in glycolipid biosynthesis; lipid IV(A) biosynthesis; lipid IV(A) from (3R)-3-hydroxytetradecanoyl-[acyl-carrier-protein] and UDP-N-acetyl-alpha-D-glucosamine: step 6/6. Transfers the gamma-phosphate of ATP to the 4'-position of a tetraacyldisaccharide 1-phosphate intermediate (termed DS-1-P) to form tetraacyldisaccharide 1,4'-bis-phosphate (lipid IVA). The sequence is that of Tetraacyldisaccharide 4'-kinase from Mesorhizobium japonicum (strain LMG 29417 / CECT 9101 / MAFF 303099) (Mesorhizobium loti (strain MAFF 303099)).